A 245-amino-acid chain; its full sequence is Putative [LysW]-aminoadipate/[LysW]-glutamate kinase (245 aa).

The substrate site is built by Arg60 and Asn162.

Belongs to the acetylglutamate kinase family. LysZ subfamily.

It is found in the cytoplasm. The catalysed reaction is [amino-group carrier protein]-C-terminal-N-(1,4-dicarboxybutan-1-yl)-L-glutamine + ATP = [amino-group carrier protein]-C-terminal-N-(1-carboxy-5-phosphooxy-5-oxopentan-1-yl)-L-glutamine + ADP. The enzyme catalyses [amino-group carrier protein]-C-terminal-gamma-(L-glutamyl)-L-glutamate + ATP = [amino-group carrier protein]-C-terminal-gamma-(5-phospho-L-glutamyl)-L-glutamate + ADP. The protein operates within amino-acid biosynthesis; L-lysine biosynthesis via AAA pathway; L-lysine from L-alpha-aminoadipate (Thermus route): step 2/5. It functions in the pathway amino-acid biosynthesis; L-arginine biosynthesis. Functionally, involved in both the arginine and lysine biosynthetic pathways. Phosphorylates the LysW-bound precursors glutamate (for arginine biosynthesis), respectively alpha-aminoadipate (for lysine biosynthesis). The chain is Putative [LysW]-aminoadipate/[LysW]-glutamate kinase from Pyrococcus abyssi (strain GE5 / Orsay).